The primary structure comprises 623 residues: UvrABC system protein C (623 aa).

A GIY-YIG domain is found at 12–91 (FSPGVYLYKD…IKQYKPRFNI (80 aa)). Residues 201-236 (SDLARGLRARMEAASLEMRFEEAAGLRDLITTVEEI) form the UVR domain. Positions 604 to 623 (PVASVAQSEDAAPDVPDPQA) are disordered.

Belongs to the UvrC family. In terms of assembly, interacts with UvrB in an incision complex.

Its subcellular location is the cytoplasm. Its function is as follows. The UvrABC repair system catalyzes the recognition and processing of DNA lesions. UvrC both incises the 5' and 3' sides of the lesion. The N-terminal half is responsible for the 3' incision and the C-terminal half is responsible for the 5' incision. This is UvrABC system protein C from Solibacter usitatus (strain Ellin6076).